The sequence spans 151 residues: Large ribosomal subunit protein uL13 (151 aa).

Residues 126–151 (YPGPNHPHQAQKPEELTLNTIPNGDK) form a disordered region. Positions 142-151 (TLNTIPNGDK) are enriched in polar residues.

It belongs to the universal ribosomal protein uL13 family. Part of the 50S ribosomal subunit.

Its function is as follows. This protein is one of the early assembly proteins of the 50S ribosomal subunit, although it is not seen to bind rRNA by itself. It is important during the early stages of 50S assembly. In Crocosphaera subtropica (strain ATCC 51142 / BH68) (Cyanothece sp. (strain ATCC 51142)), this protein is Large ribosomal subunit protein uL13.